The following is a 235-amino-acid chain: Uridylate kinase (235 aa).

9 to 12 (KLSG) provides a ligand contact to ATP. Glycine 51 lines the UMP pocket. 2 residues coordinate ATP: glycine 52 and arginine 56. UMP-binding positions include aspartate 71 and 132 to 139 (TGNPYFTT). Positions 159, 165, and 168 each coordinate ATP.

Belongs to the UMP kinase family. In terms of assembly, homohexamer.

The protein resides in the cytoplasm. It catalyses the reaction UMP + ATP = UDP + ADP. Its pathway is pyrimidine metabolism; CTP biosynthesis via de novo pathway; UDP from UMP (UMPK route): step 1/1. Its activity is regulated as follows. Inhibited by UTP. Its function is as follows. Catalyzes the reversible phosphorylation of UMP to UDP. The polypeptide is Uridylate kinase (Cytophaga hutchinsonii (strain ATCC 33406 / DSM 1761 / CIP 103989 / NBRC 15051 / NCIMB 9469 / D465)).